The primary structure comprises 152 residues: UPF0756 membrane protein Daud_1310 (152 aa).

A run of 4 helical transmembrane segments spans residues 14–34, 51–71, 76–96, and 112–132; these read LVGVLAKSHLIAAAACILLFI, LELGLLILLLTIMVPLANGKI, IIYNLTSIPGLLAILGGALAT, and IIFGLIIGSIFGILFLGGMPV.

This sequence belongs to the UPF0756 family.

The protein resides in the cell membrane. The chain is UPF0756 membrane protein Daud_1310 from Desulforudis audaxviator (strain MP104C).